The sequence spans 85 residues: ATP synthase subunit c (85 aa).

Helical transmembrane passes span 19–39 and 62–82; these read LGAA…IGKI and IIAA…CLLV.

Belongs to the ATPase C chain family. F-type ATPases have 2 components, F(1) - the catalytic core - and F(0) - the membrane proton channel. F(1) has five subunits: alpha(3), beta(3), gamma(1), delta(1), epsilon(1). F(0) has three main subunits: a(1), b(2) and c(10-14). The alpha and beta chains form an alternating ring which encloses part of the gamma chain. F(1) is attached to F(0) by a central stalk formed by the gamma and epsilon chains, while a peripheral stalk is formed by the delta and b chains.

It localises to the cell inner membrane. Its function is as follows. F(1)F(0) ATP synthase produces ATP from ADP in the presence of a proton or sodium gradient. F-type ATPases consist of two structural domains, F(1) containing the extramembraneous catalytic core and F(0) containing the membrane proton channel, linked together by a central stalk and a peripheral stalk. During catalysis, ATP synthesis in the catalytic domain of F(1) is coupled via a rotary mechanism of the central stalk subunits to proton translocation. In terms of biological role, key component of the F(0) channel; it plays a direct role in translocation across the membrane. A homomeric c-ring of between 10-14 subunits forms the central stalk rotor element with the F(1) delta and epsilon subunits. This is ATP synthase subunit c from Bacteroides fragilis (strain ATCC 25285 / DSM 2151 / CCUG 4856 / JCM 11019 / LMG 10263 / NCTC 9343 / Onslow / VPI 2553 / EN-2).